Reading from the N-terminus, the 90-residue chain is Acylphosphatase (90 aa).

One can recognise an Acylphosphatase-like domain in the interval 3-90; the sequence is KKQFIVYGLV…REFTDFSVRY (88 aa). Residues Arg-18 and Asn-36 contribute to the active site.

It belongs to the acylphosphatase family.

The enzyme catalyses an acyl phosphate + H2O = a carboxylate + phosphate + H(+). The sequence is that of Acylphosphatase (acyP) from Pasteurella multocida (strain Pm70).